A 339-amino-acid chain; its full sequence is Anthranilate phosphoribosyltransferase (339 aa).

5-phospho-alpha-D-ribose 1-diphosphate is bound by residues Gly-81, 84-85, Ser-89, 91-94, 109-117, and Ala-121; these read GD, NVSS, and KHGNRALSS. Gly-81 provides a ligand contact to anthranilate. Ser-93 lines the Mg(2+) pocket. Residue Asn-112 coordinates anthranilate. An anthranilate-binding site is contributed by Arg-167. Mg(2+)-binding residues include Asp-225 and Glu-226.

Belongs to the anthranilate phosphoribosyltransferase family. As to quaternary structure, homodimer. It depends on Mg(2+) as a cofactor.

The catalysed reaction is N-(5-phospho-beta-D-ribosyl)anthranilate + diphosphate = 5-phospho-alpha-D-ribose 1-diphosphate + anthranilate. It functions in the pathway amino-acid biosynthesis; L-tryptophan biosynthesis; L-tryptophan from chorismate: step 2/5. Functionally, catalyzes the transfer of the phosphoribosyl group of 5-phosphorylribose-1-pyrophosphate (PRPP) to anthranilate to yield N-(5'-phosphoribosyl)-anthranilate (PRA). The sequence is that of Anthranilate phosphoribosyltransferase from Brucella canis (strain ATCC 23365 / NCTC 10854 / RM-666).